Here is a 271-residue protein sequence, read N- to C-terminus: Interleukin-1 alpha (271 aa).

Residues 1-112 (MAKVPDMFED…DSEEEIIKPR (112 aa)) constitute a propeptide that is removed on maturation. Residue K82 is modified to N6-acetyllysine. Residues 82 to 86 (KKRRL) form a nuclear localization signal (NLS) region. S87 carries the post-translational modification Phosphoserine. N-linked (GlcNAc...) asparagine glycans are attached at residues N102 and N141.

It belongs to the IL-1 family. Monomer. Interacts with TMED10; the interaction mediates the translocation from the cytoplasm into the ERGIC (endoplasmic reticulum-Golgi intermediate compartment) and thereby secretion. Interacts with IL1R1. Interacts with S100A13; this interaction is the first step in the export of IL1A, followed by direct translocation of this complex across the plasma membrane. Post-translationally, acetylated within its nuclear localization sequence, which impacts subcellular localization. Proteolytic processed by CAPN1 in a calcium-dependent manner. Cleavage from 31 kDa precursor to 18 kDa biologically active molecules. In terms of processing, phosphorylated. Phosphorylation greatly enhances susceptibility to digestion and promotes the conversion of pre-IL1A alpha to the biologically active IL1A.

The protein localises to the nucleus. The protein resides in the cytoplasm. Its subcellular location is the secreted. Cytokine constitutively present intracellularly in nearly all resting non-hematopoietic cells that plays an important role in inflammation and bridges the innate and adaptive immune systems. After binding to its receptor IL1R1 together with its accessory protein IL1RAP, forms the high affinity interleukin-1 receptor complex. Signaling involves the recruitment of adapter molecules such as MYD88, IRAK1 or IRAK4. In turn, mediates the activation of NF-kappa-B and the three MAPK pathways p38, p42/p44 and JNK pathways. Within the cell, acts as an alarmin and cell death results in its liberation in the extracellular space after disruption of the cell membrane to induce inflammation and alert the host to injury or damage. In addition to its role as a danger signal, which occurs when the cytokine is passively released by cell necrosis, directly senses DNA damage and acts as signal for genotoxic stress without loss of cell integrity. The sequence is that of Interleukin-1 alpha (IL1A) from Cercocebus atys (Sooty mangabey).